A 39-amino-acid chain; its full sequence is MQRNPNPNNLPVELNRTSLYLGLLLVFVTGVLFSSYFFN.

The chain crosses the membrane as a helical span at residues 18–38; sequence SLYLGLLLVFVTGVLFSSYFF.

It belongs to the PsbL family. PSII is composed of 1 copy each of membrane proteins PsbA, PsbB, PsbC, PsbD, PsbE, PsbF, PsbH, PsbI, PsbJ, PsbK, PsbL, PsbM, PsbT, PsbX, PsbY, PsbZ, Psb30/Ycf12, at least 3 peripheral proteins of the oxygen-evolving complex and a large number of cofactors. It forms dimeric complexes.

It localises to the plastid. It is found in the organellar chromatophore thylakoid membrane. Functionally, one of the components of the core complex of photosystem II (PSII). PSII is a light-driven water:plastoquinone oxidoreductase that uses light energy to abstract electrons from H(2)O, generating O(2) and a proton gradient subsequently used for ATP formation. It consists of a core antenna complex that captures photons, and an electron transfer chain that converts photonic excitation into a charge separation. This subunit is found at the monomer-monomer interface and is required for correct PSII assembly and/or dimerization. The polypeptide is Photosystem II reaction center protein L (Paulinella chromatophora).